A 178-amino-acid polypeptide reads, in one-letter code: Bifunctional protein PyrR (178 aa).

The PRPP-binding signature appears at 99–111 (IILVDDVLFTGRT).

The protein belongs to the purine/pyrimidine phosphoribosyltransferase family. PyrR subfamily. As to quaternary structure, homodimer and homohexamer; in equilibrium.

It carries out the reaction UMP + diphosphate = 5-phospho-alpha-D-ribose 1-diphosphate + uracil. Functionally, regulates transcriptional attenuation of the pyrimidine nucleotide (pyr) operon by binding in a uridine-dependent manner to specific sites on pyr mRNA. This disrupts an antiterminator hairpin in the RNA and favors formation of a downstream transcription terminator, leading to a reduced expression of downstream genes. Also displays a weak uracil phosphoribosyltransferase activity which is not physiologically significant. The protein is Bifunctional protein PyrR of Clostridium novyi (strain NT).